The primary structure comprises 2646 residues: Probable inactive serine/threonine-protein kinase roco10 (2646 aa).

7 disordered regions span residues 28–122, 138–168, 205–248, 281–457, 477–516, 605–656, and 882–907; these read LNYS…LSGG, NIPI…KDKD, PLFI…VSPS, QQQR…VKQA, MSKL…HTSP, TSPN…PHQY, and QSSS…STPS. The segment covering 46–56 has biased composition (polar residues); it reads PQQNLLENDTL. Composition is skewed to low complexity over residues 78–115, 147–161, and 215–228; these read IITT…TSPS, SPTS…NNNN, and SRNN…GGNK. Positions 235-248 are enriched in polar residues; the sequence is KISSTSAAGDVSPS. Low complexity-rich tracts occupy residues 285-297 and 325-334; these read NGNN…NNNN and NNNNNNNNNN. The span at 335 to 345 shows a compositional bias: polar residues; that stretch reads KQPQHPMNGNH. Positions 346–394 are enriched in low complexity; sequence SPSNGTSGSLSMSGSGIDNGGNNNNNSNTHGSSSNQSSGVTSPIIQSTS. Composition is skewed to polar residues over residues 402–416 and 428–443; these read GLNS…SSPT and TSAS…PLMN. 5 stretches are compositionally biased toward low complexity: residues 444 to 454, 491 to 516, 605 to 627, 634 to 651, and 883 to 907; these read STGVSSSSSGV, PSSP…HTSP, TSPN…NSSP, QQQQ…NTNT, and SSSS…STPS. One can recognise a Rho-GAP domain in the interval 585–807; sequence SSISPISTAA…MFIQQADILF (223 aa). LRR repeat units follow at residues 968–987, 989–1011, 1012–1033, 1040–1061, 1062–1083, 1085–1108, 1109–1131, 1132–1154, 1155–1176, 1178–1199, 1201–1222, 1224–1247, 1248–1270, 1271–1298, and 1303–1327; these read QKLD…IKQL, DLQE…ARLT, SLRT…MADF, NLEN…YTWL, KLKT…IFQI, TLEV…CTST, KLRS…INLV, ELQV…QKLT, SLTE…LLLL, NLKK…IHRM, SLIE…IVAL, KLNS…YIQK, GKEG…YRTR, IIML…SFSS, and LPSL…ILDI. Positions 1262 to 1474 constitute a Roc domain; that stretch reads TNVPCYRTRI…RDIKQMIAKN (213 aa). Disordered stretches follow at residues 1293 to 1317, 1651 to 1670, and 1957 to 2026; these read KSSF…SNNS, NNNN…SRSM, and NNSS…KEKE. The segment covering 1651–1669 has biased composition (low complexity); it reads NNNNSNGNNVGRGRSGSRS. Residues 1966–1975 show a composition bias toward polar residues; the sequence is PIASSRSNPK. Low complexity predominate over residues 1983-1996; the sequence is NLIQSNNNDNNNSL. Over residues 1997 to 2026 the composition is skewed to basic and acidic residues; it reads SKKDLKELAKQNKEKEKEKEKDKDKEKEKE. The 294-residue stretch at 2049 to 2342 folds into the Protein kinase domain; sequence FSICHFIKEI…PSKIISQLYT (294 aa). Residues 2055–2063 and K2094 each bind ATP; that span reads IKEIDYREI. The RGS domain maps to 2412–2536; sequence MVVLNNKQST…FTVPTTNKNG (125 aa).

It belongs to the protein kinase superfamily. TKL Ser/Thr protein kinase family. ROCO subfamily.

This chain is Probable inactive serine/threonine-protein kinase roco10 (roco10), found in Dictyostelium discoideum (Social amoeba).